A 138-amino-acid chain; its full sequence is ATP synthase epsilon chain (138 aa).

The protein belongs to the ATPase epsilon chain family. As to quaternary structure, F-type ATPases have 2 components, CF(1) - the catalytic core - and CF(0) - the membrane proton channel. CF(1) has five subunits: alpha(3), beta(3), gamma(1), delta(1), epsilon(1). CF(0) has three main subunits: a, b and c.

It is found in the cell membrane. Produces ATP from ADP in the presence of a proton gradient across the membrane. The sequence is that of ATP synthase epsilon chain from Caldanaerobacter subterraneus subsp. tengcongensis (strain DSM 15242 / JCM 11007 / NBRC 100824 / MB4) (Thermoanaerobacter tengcongensis).